A 630-amino-acid chain; its full sequence is Chaperone protein HtpG (630 aa).

The segment at methionine 1 to arginine 341 is a; substrate-binding. A b region spans residues glutamate 342 to arginine 558. A c region spans residues methionine 559–valine 630.

Belongs to the heat shock protein 90 family. In terms of assembly, homodimer.

It is found in the cytoplasm. Molecular chaperone. Has ATPase activity. The protein is Chaperone protein HtpG of Bordetella avium (strain 197N).